Reading from the N-terminus, the 220-residue chain is Large ribosomal subunit protein bL25 (220 aa).

Belongs to the bacterial ribosomal protein bL25 family. CTC subfamily. As to quaternary structure, part of the 50S ribosomal subunit; part of the 5S rRNA/L5/L18/L25 subcomplex. Contacts the 5S rRNA. Binds to the 5S rRNA independently of L5 and L18.

Functionally, this is one of the proteins that binds to the 5S RNA in the ribosome where it forms part of the central protuberance. This is Large ribosomal subunit protein bL25 from Zymomonas mobilis subsp. mobilis (strain ATCC 31821 / ZM4 / CP4).